The primary structure comprises 2244 residues: Multifunctional protein ura1 (2244 aa).

A GATase (Glutamine amidotransferase) region spans residues 1–437 (MSGLLPSLSS…GPRDTEFLFD (437 aa)). A disordered region spans residues 16–44 (QSEALGMPRTHGPKPSENDPKEPTCSPSP). L-glutamine contacts are provided by serine 101, glycine 309, and glycine 311. Positions 264-449 (RILVIDVGMK…IDVVKRSADA (186 aa)) constitute a Glutamine amidotransferase type-1 domain. Cysteine 338 serves as the catalytic Nucleophile; for GATase activity. L-glutamine-binding residues include glutamine 342, asparagine 380, glycine 382, and tyrosine 383. Residues histidine 422 and glutamate 424 each act as for GATase activity in the active site. Positions 438 to 477 (VFIDVVKRSADAKSLQPFKLPGGTIEENRSRHPLVDAKRV) are linker. Residues 478–1014 (LILGSGGLSI…VEHDIHFNDK (537 aa)) are CPSase A. Positions 478–1514 (LILGSGGLSI…TNVKCAKLMI (1037 aa)) are CPSase (Carbamoyl phosphate synthase). Arginine 594, arginine 634, glycine 640, glycine 641, arginine 671, methionine 673, glutamate 678, glycine 704, isoleucine 705, histidine 706, glutamine 747, and glutamate 761 together coordinate ATP. Residues 598–790 (ARAMDEINEK…LAFTAAKLGL (193 aa)) enclose the ATP-grasp 1 domain. Residues glutamine 747, glutamate 761, and asparagine 763 each contribute to the Mg(2+) site. Mn(2+)-binding residues include glutamine 747, glutamate 761, and asparagine 763. The segment at 1015 to 1514 (GVMVLGSGVY…TNVKCAKLMI (500 aa)) is CPSase B. Serine 1119 bears the Phosphoserine mark. In terms of domain architecture, ATP-grasp 2 spans 1133 to 1324 (SRMLDDIGVD…MISMATDVIM (192 aa)). ATP-binding residues include arginine 1169, lysine 1208, isoleucine 1210, glutamate 1215, glycine 1240, valine 1241, histidine 1242, serine 1243, glutamine 1283, and glutamate 1295. Residues glutamine 1283, glutamate 1295, and asparagine 1297 each contribute to the Mg(2+) site. 3 residues coordinate Mn(2+): glutamine 1283, glutamate 1295, and asparagine 1297. One can recognise an MGS-like domain in the interval 1390 to 1552 (FRLPKKNILI…INISAFLPEF (163 aa)). The tract at residues 1515 to 1524 (EAICRNLDFS) is linker. The defective DHOase domain stretch occupies residues 1525–1853 (LSTVDFQSSF…FDGHDVFFDG (329 aa)). Residues 1854–1935 (ELNFEHTYGR…VQLINSSPFY (82 aa)) form a linker region. Phosphoserine is present on residues serine 1881 and serine 1885. Positions 1936–2244 (RKHIISVHQV…CVMGATEVAN (309 aa)) are ATCase (Aspartate transcarbamylase). Carbamoyl phosphate is bound by residues arginine 1988 and threonine 1989. Residue lysine 2016 coordinates L-aspartate. Carbamoyl phosphate is bound by residues arginine 2037, histidine 2065, and glutamine 2068. L-aspartate-binding residues include arginine 2098 and arginine 2160. Residues leucine 2199 and proline 2200 each contribute to the carbamoyl phosphate site.

This sequence in the N-terminal section; belongs to the CarA family. The protein in the 2nd section; belongs to the CarB family. It in the 3rd section; belongs to the metallo-dependent hydrolases superfamily. DHOase family. CAD subfamily. In the C-terminal section; belongs to the aspartate/ornithine carbamoyltransferase superfamily. ATCase family. Requires Mg(2+) as cofactor. It depends on Mn(2+) as a cofactor.

The catalysed reaction is hydrogencarbonate + L-glutamine + 2 ATP + H2O = carbamoyl phosphate + L-glutamate + 2 ADP + phosphate + 2 H(+). It catalyses the reaction L-glutamine + H2O = L-glutamate + NH4(+). It carries out the reaction hydrogencarbonate + NH4(+) + 2 ATP = carbamoyl phosphate + 2 ADP + phosphate + 2 H(+). The enzyme catalyses carbamoyl phosphate + L-aspartate = N-carbamoyl-L-aspartate + phosphate + H(+). It functions in the pathway pyrimidine metabolism; UMP biosynthesis via de novo pathway; (S)-dihydroorotate from bicarbonate: step 1/3. The protein operates within pyrimidine metabolism; UMP biosynthesis via de novo pathway; (S)-dihydroorotate from bicarbonate: step 2/3. Both CPSase and ATCase activities are feedback inhibited by the end product UTP. Multifunctional protein that encodes the first 2 enzymatic activities of the de novo pyrimidine pathway: carbamoylphosphate synthetase (CPSase; EC 6.3.5.5) and aspartate transcarbamylase (ATCase; EC 2.1.3.2). The CPSase-function is accomplished in 2 steps, by a glutamine-dependent amidotransferase activity (GATase) that binds and cleaves glutamine to produce ammonia, followed by an ammonium-dependent carbamoyl phosphate synthetase, which reacts with the ammonia, hydrogencarbonate and ATP to form carbamoyl phosphate. The endogenously produced carbamoyl phosphate is sequestered and channeled to the ATCase active site. ATCase then catalyzes the formation of carbamoyl-L-aspartate from L-aspartate and carbamoyl phosphate. The protein is Multifunctional protein ura1 (ura1) of Schizosaccharomyces pombe (strain 972 / ATCC 24843) (Fission yeast).